A 224-amino-acid chain; its full sequence is Urease accessory protein UreG (224 aa).

Positions 1-20 (MATHSHPHSHTVPARPRRVR) are enriched in basic residues. Residues 1-25 (MATHSHPHSHTVPARPRRVRKPGEP) form a disordered region. Residue 32–39 (GPVGSGKT) participates in GTP binding.

It belongs to the SIMIBI class G3E GTPase family. UreG subfamily. As to quaternary structure, homodimer. UreD, UreF and UreG form a complex that acts as a GTP-hydrolysis-dependent molecular chaperone, activating the urease apoprotein by helping to assemble the nickel containing metallocenter of UreC. The UreE protein probably delivers the nickel.

It is found in the cytoplasm. In terms of biological role, facilitates the functional incorporation of the urease nickel metallocenter. This process requires GTP hydrolysis, probably effectuated by UreG. In Mycobacterium bovis (strain ATCC BAA-935 / AF2122/97), this protein is Urease accessory protein UreG.